A 316-amino-acid chain; its full sequence is Olfactory receptor 10H3 (316 aa).

Over 1–25 the chain is Extracellular; sequence MPGQNYRTISEFILSGFSAFPQQLL. Residues 26–46 form a helical membrane-spanning segment; it reads PVLFLLYLLMFLFTLLGNLLI. Topologically, residues 47–54 are cytoplasmic; sequence MATVWIER. Residues 55–75 traverse the membrane as a helical segment; sequence RLHTPMYLFLCALSISEILFT. The Extracellular segment spans residues 76-99; sequence VAITPRMLADLLFTHRSITFVACA. Residues Cys98 and Cys190 are joined by a disulfide bond. A helical membrane pass occupies residues 100–120; sequence IQMFFSFMFGFTHSFLLMVMG. At 121–139 the chain is on the cytoplasmic side; sequence YDHYVTICHPLHYNMLMSP. Residues 140 to 160 form a helical membrane-spanning segment; sequence RGCAHLVAWTWAGGSVMGMMV. At 161-197 the chain is on the extracellular side; it reads TMMVFHLTFCGSNVIHHFLCHVLSLLKLACGSKTSSV. A helical transmembrane segment spans residues 198-218; the sequence is IMGVMLVCVTALIGCLFLIIL. Topologically, residues 219–238 are cytoplasmic; it reads SFVFIVAAILRIPSAEGRHK. The chain crosses the membrane as a helical span at residues 239–259; that stretch reads TFSTCVSHLTVVVMHYSFASL. Residues 260–272 lie on the Extracellular side of the membrane; sequence IYLKPKGLHSMYS. The chain crosses the membrane as a helical span at residues 273-293; the sequence is DALMATTYTVFTPFLSPIIFS. Topologically, residues 294–316 are cytoplasmic; that stretch reads LRNKELKNAINKNFCRRFCPLSS.

The protein belongs to the G-protein coupled receptor 1 family.

It is found in the cell membrane. Its function is as follows. Odorant receptor. This Homo sapiens (Human) protein is Olfactory receptor 10H3 (OR10H3).